A 205-amino-acid polypeptide reads, in one-letter code: Ephrin-A1 (205 aa).

Positions 1–17 (MEFLWAPLLGLCCSLAA) are cleaved as a signal peptide. Residues 18-151 (ADRHIVFWNS…KLKVTVNGKI (134 aa)) form the Ephrin RBD domain. Asparagine 26 carries N-linked (GlcNAc...) asparagine glycosylation. Disulfide bonds link cysteine 51–cysteine 92 and cysteine 80–cysteine 140. Serine 182 is lipidated: GPI-anchor amidated serine. The propeptide at 183 to 205 (AAPRLFPLVWAVLLLPLLLLQTQ) is removed in mature form.

This sequence belongs to the ephrin family. As to quaternary structure, monomer. Homodimer. Forms heterodimers with EPHA2. Binds to the receptor tyrosine kinases EPHA2, EPHA3, EPHA4, EPHA5, EPHA6 and EPHA7. Also binds with low affinity to EPHA1. In terms of processing, undergoes proteolysis by a metalloprotease to give rise to a soluble monomeric form. Post-translationally, N-Glycosylation is required for binding to EPHA2 receptor and inducing its internalization.

The protein resides in the cell membrane. The protein localises to the secreted. Functionally, cell surface GPI-bound ligand for Eph receptors, a family of receptor tyrosine kinases which are crucial for migration, repulsion and adhesion during neuronal, vascular and epithelial development. Binds promiscuously Eph receptors residing on adjacent cells, leading to contact-dependent bidirectional signaling into neighboring cells. Plays an important role in angiogenesis and tumor neovascularization. The recruitment of VAV2, VAV3 and PI3-kinase p85 subunit by phosphorylated EPHA2 is critical for EFNA1-induced RAC1 GTPase activation and vascular endothelial cell migration and assembly. Exerts anti-oncogenic effects in tumor cells through activation and down-regulation of EPHA2. Activates EPHA2 by inducing tyrosine phosphorylation which leads to its internalization and degradation. Acts as a negative regulator in the tumorigenesis of gliomas by down-regulating EPHA2 and FAK. Can evoke collapse of embryonic neuronal growth cone and regulates dendritic spine morphogenesis. The chain is Ephrin-A1 (Efna1) from Rattus norvegicus (Rat).